Reading from the N-terminus, the 220-residue chain is Phosphatidylserine decarboxylase proenzyme (220 aa).

The active-site Schiff-base intermediate with substrate; via pyruvic acid is the Ser188. Ser188 is modified (pyruvic acid (Ser); by autocatalysis).

The protein belongs to the phosphatidylserine decarboxylase family. PSD-A subfamily. As to quaternary structure, heterodimer of a large membrane-associated beta subunit and a small pyruvoyl-containing alpha subunit. Requires pyruvate as cofactor. Is synthesized initially as an inactive proenzyme. Formation of the active enzyme involves a self-maturation process in which the active site pyruvoyl group is generated from an internal serine residue via an autocatalytic post-translational modification. Two non-identical subunits are generated from the proenzyme in this reaction, and the pyruvate is formed at the N-terminus of the alpha chain, which is derived from the carboxyl end of the proenzyme. The post-translation cleavage follows an unusual pathway, termed non-hydrolytic serinolysis, in which the side chain hydroxyl group of the serine supplies its oxygen atom to form the C-terminus of the beta chain, while the remainder of the serine residue undergoes an oxidative deamination to produce ammonia and the pyruvoyl prosthetic group on the alpha chain.

The protein resides in the cell membrane. It catalyses the reaction a 1,2-diacyl-sn-glycero-3-phospho-L-serine + H(+) = a 1,2-diacyl-sn-glycero-3-phosphoethanolamine + CO2. The protein operates within phospholipid metabolism; phosphatidylethanolamine biosynthesis; phosphatidylethanolamine from CDP-diacylglycerol: step 2/2. Catalyzes the formation of phosphatidylethanolamine (PtdEtn) from phosphatidylserine (PtdSer). This Parabacteroides distasonis (strain ATCC 8503 / DSM 20701 / CIP 104284 / JCM 5825 / NCTC 11152) protein is Phosphatidylserine decarboxylase proenzyme.